The chain runs to 412 residues: Protein translocase subunit SecY (412 aa).

9 helical membrane-spanning segments follow: residues 17–37 (IFLTIGLLVLSRLGTFIPVPG), 58–78 (IFSGGGFASIGIFALGIVPYI), 117–137 (ALGWAAIQSLGVSFWVRPYVF), 143–163 (FVVQMTLALTTGSMLIMWFSE), 170–190 (IGNGPSLLIFINIIAGLPKLI), 251–271 (VMPIIFASAILVLPAYLGQVI), 293–313 (YLIFYFSLILFFSYFYASLII), 350–370 (TFLGALFLAFIAVVPSIIENI), and 372–392 (SISTFKGLGATSLLILVGVAI).

Belongs to the SecY/SEC61-alpha family. In terms of assembly, component of the plastid Sec protein translocase complex, which is composed of at least SecY and SecE.

Its subcellular location is the plastid. It localises to the chloroplast thylakoid membrane. Its function is as follows. The central subunit of the protein translocation channel SecYE. Consists of two halves formed by TMs 1-5 and 6-10. These two domains form a lateral gate at the front which open onto the bilayer between TMs 2 and 7, and are clamped together by SecE at the back. The channel is closed by both a pore ring composed of hydrophobic SecY resides and a short helix (helix 2A) on the extracellular side of the membrane which forms a plug. The protein is Protein translocase subunit SecY of Pyrenomonas salina.